Reading from the N-terminus, the 157-residue chain is Beta-defensin 125 (157 aa).

An N-terminal signal peptide occupies residues 1–20 (MNILMLTFIICGLLTQVTKG). Disulfide bonds link cysteine 27/cysteine 55, cysteine 35/cysteine 49, and cysteine 39/cysteine 56. The interval 109-157 (GETMTPETNTPETTVPPSETTTPETTMPPSETATSETMPPPSQTALTHN) is disordered. The span at 110–145 (ETMTPETNTPETTVPPSETTTPETTMPPSETATSET) shows a compositional bias: low complexity.

The protein belongs to the beta-defensin family.

Its subcellular location is the secreted. Functionally, has antibacterial activity. This is Beta-defensin 125 (DEFB125) from Gorilla gorilla gorilla (Western lowland gorilla).